A 340-amino-acid polypeptide reads, in one-letter code: Phosphoribosylformylglycinamidine cyclo-ligase (340 aa).

The protein belongs to the AIR synthase family.

Its subcellular location is the cytoplasm. The catalysed reaction is 2-formamido-N(1)-(5-O-phospho-beta-D-ribosyl)acetamidine + ATP = 5-amino-1-(5-phospho-beta-D-ribosyl)imidazole + ADP + phosphate + H(+). It participates in purine metabolism; IMP biosynthesis via de novo pathway; 5-amino-1-(5-phospho-D-ribosyl)imidazole from N(2)-formyl-N(1)-(5-phospho-D-ribosyl)glycinamide: step 2/2. The chain is Phosphoribosylformylglycinamidine cyclo-ligase from Streptococcus agalactiae serotype Ia (strain ATCC 27591 / A909 / CDC SS700).